A 170-amino-acid polypeptide reads, in one-letter code: RxLR effector protein PITG_07555 (170 aa).

An N-terminal signal peptide occupies residues 1–17; it reads MQAYHLLLVCMYISCSA. The short motif at 50–62 is the RxLR-dEER element; sequence RALRTHNPDREER.

Belongs to the RxLR effector family.

Its subcellular location is the secreted. The protein localises to the host cytoplasm. It localises to the host nucleus. Its function is as follows. Effector that enhances P.infestans colonization of Nicotiana benthamiana leaves. The protein is RxLR effector protein PITG_07555 of Phytophthora infestans (strain T30-4) (Potato late blight agent).